The sequence spans 180 residues: ATP synthase subunit delta (180 aa).

The protein belongs to the ATPase delta chain family. As to quaternary structure, F-type ATPases have 2 components, F(1) - the catalytic core - and F(0) - the membrane proton channel. F(1) has five subunits: alpha(3), beta(3), gamma(1), delta(1), epsilon(1). F(0) has three main subunits: a(1), b(2) and c(10-14). The alpha and beta chains form an alternating ring which encloses part of the gamma chain. F(1) is attached to F(0) by a central stalk formed by the gamma and epsilon chains, while a peripheral stalk is formed by the delta and b chains.

It localises to the cell membrane. F(1)F(0) ATP synthase produces ATP from ADP in the presence of a proton or sodium gradient. F-type ATPases consist of two structural domains, F(1) containing the extramembraneous catalytic core and F(0) containing the membrane proton channel, linked together by a central stalk and a peripheral stalk. During catalysis, ATP synthesis in the catalytic domain of F(1) is coupled via a rotary mechanism of the central stalk subunits to proton translocation. Its function is as follows. This protein is part of the stalk that links CF(0) to CF(1). It either transmits conformational changes from CF(0) to CF(1) or is implicated in proton conduction. This is ATP synthase subunit delta from Leuconostoc mesenteroides subsp. mesenteroides (strain ATCC 8293 / DSM 20343 / BCRC 11652 / CCM 1803 / JCM 6124 / NCDO 523 / NBRC 100496 / NCIMB 8023 / NCTC 12954 / NRRL B-1118 / 37Y).